A 334-amino-acid chain; its full sequence is Holliday junction branch migration complex subunit RuvB (334 aa).

The segment at 4 to 184 is large ATPase domain (RuvB-L); it reads ADRLIQPQIQ…FGIPLRLEFY (181 aa). ATP is bound by residues arginine 24, glycine 65, lysine 68, threonine 69, threonine 70, 131-133, arginine 174, tyrosine 184, and arginine 221; that span reads EDY. Threonine 69 is a Mg(2+) binding site. Residues 185-255 form a small ATPAse domain (RuvB-S) region; that stretch reads NIKDLSTIVT…VAEHALDLLD (71 aa). The head domain (RuvB-H) stretch occupies residues 258–334; sequence SEGFDYMDRK…YQHFELIKPE (77 aa). Positions 294, 313, and 318 each coordinate DNA.

The protein belongs to the RuvB family. Homohexamer. Forms an RuvA(8)-RuvB(12)-Holliday junction (HJ) complex. HJ DNA is sandwiched between 2 RuvA tetramers; dsDNA enters through RuvA and exits via RuvB. An RuvB hexamer assembles on each DNA strand where it exits the tetramer. Each RuvB hexamer is contacted by two RuvA subunits (via domain III) on 2 adjacent RuvB subunits; this complex drives branch migration. In the full resolvosome a probable DNA-RuvA(4)-RuvB(12)-RuvC(2) complex forms which resolves the HJ.

Its subcellular location is the cytoplasm. It carries out the reaction ATP + H2O = ADP + phosphate + H(+). The RuvA-RuvB-RuvC complex processes Holliday junction (HJ) DNA during genetic recombination and DNA repair, while the RuvA-RuvB complex plays an important role in the rescue of blocked DNA replication forks via replication fork reversal (RFR). RuvA specifically binds to HJ cruciform DNA, conferring on it an open structure. The RuvB hexamer acts as an ATP-dependent pump, pulling dsDNA into and through the RuvAB complex. RuvB forms 2 homohexamers on either side of HJ DNA bound by 1 or 2 RuvA tetramers; 4 subunits per hexamer contact DNA at a time. Coordinated motions by a converter formed by DNA-disengaged RuvB subunits stimulates ATP hydrolysis and nucleotide exchange. Immobilization of the converter enables RuvB to convert the ATP-contained energy into a lever motion, pulling 2 nucleotides of DNA out of the RuvA tetramer per ATP hydrolyzed, thus driving DNA branch migration. The RuvB motors rotate together with the DNA substrate, which together with the progressing nucleotide cycle form the mechanistic basis for DNA recombination by continuous HJ branch migration. Branch migration allows RuvC to scan DNA until it finds its consensus sequence, where it cleaves and resolves cruciform DNA. The protein is Holliday junction branch migration complex subunit RuvB of Shewanella baltica (strain OS195).